A 333-amino-acid chain; its full sequence is Glycerol-3-phosphate dehydrogenase [NAD(P)+] (333 aa).

Residues Trp15 and Lys108 each contribute to the NADPH site. The sn-glycerol 3-phosphate site is built by Lys108, Gly136, and Ser138. Residue Ala140 coordinates NADPH. Residues Lys191, Asp244, Ser254, Arg255, and Asn256 each coordinate sn-glycerol 3-phosphate. Lys191 functions as the Proton acceptor in the catalytic mechanism. Arg255 is a binding site for NADPH. 2 residues coordinate NADPH: Val279 and Glu281.

It belongs to the NAD-dependent glycerol-3-phosphate dehydrogenase family.

It is found in the cytoplasm. The enzyme catalyses sn-glycerol 3-phosphate + NAD(+) = dihydroxyacetone phosphate + NADH + H(+). It carries out the reaction sn-glycerol 3-phosphate + NADP(+) = dihydroxyacetone phosphate + NADPH + H(+). Its pathway is membrane lipid metabolism; glycerophospholipid metabolism. In terms of biological role, catalyzes the reduction of the glycolytic intermediate dihydroxyacetone phosphate (DHAP) to sn-glycerol 3-phosphate (G3P), the key precursor for phospholipid synthesis. This is Glycerol-3-phosphate dehydrogenase [NAD(P)+] from Maricaulis maris (strain MCS10) (Caulobacter maris).